The primary structure comprises 353 residues: 6-phosphogluconolactonase (353 aa).

It belongs to the cycloisomerase 2 family.

It is found in the cytoplasm. It catalyses the reaction 6-phospho-D-glucono-1,5-lactone + H2O = 6-phospho-D-gluconate + H(+). It participates in carbohydrate degradation; pentose phosphate pathway; D-ribulose 5-phosphate from D-glucose 6-phosphate (oxidative stage): step 2/3. Functionally, carboxylic ester hydrolase that may be involved in ulvan degradation. Ulvan is the main polysaccharide component of the Ulvales (green seaweed) cell wall. It is composed of disaccharide building blocks comprising 3-sulfated rhamnose (Rha3S) linked to D-glucuronic acid (GlcA), L-iduronic acid (IduA), or D-xylose (Xyl). Catalyzes the hydrolysis of 6-phosphogluconolactone to 6-phosphogluconate. This is 6-phosphogluconolactonase (pgl) from Formosa agariphila (strain DSM 15362 / KCTC 12365 / LMG 23005 / KMM 3901 / M-2Alg 35-1).